The sequence spans 622 residues: Matrilin-4 (622 aa).

An N-terminal signal peptide occupies residues 1–18; sequence MRGLLCWPVLLLLLQPWE. Residues 34 to 213 enclose the VWFA 1 domain; that stretch reads DLVFVIDSSR…EFGLQFQSRL (180 aa). The N-linked (GlcNAc...) asparagine glycan is linked to Asn69. Positions 215 to 255 constitute an EGF-like 1; incomplete domain; the sequence is GKDQCAEGGHGCQHQCVNAWAMFHCTCNPGYKLAADNKSCL. 12 cysteine pairs are disulfide-bonded: Cys219–Cys230, Cys226–Cys239, Cys241–Cys254, Cys260–Cys271, Cys267–Cys280, Cys282–Cys295, Cys301–Cys312, Cys308–Cys321, Cys323–Cys336, Cys342–Cys353, Cys349–Cys362, and Cys364–Cys377. A glycan (N-linked (GlcNAc...) asparagine) is linked at Asn251. EGF-like domains are found at residues 256–292, 297–337, and 342–377; these read AIDLCAEGTHGCEHHCVNSPGSYFCHCQVGFVLQQDQ, AIDY…RSCQ, and CNGVDHGCEFQCVSEGLSYRCLCPEGRQLQADGKSC. Residue Asn305 is glycosylated (N-linked (GlcNAc...) asparagine). A VWFA 2 domain is found at 386–561; that stretch reads DLVLLVDGSK…GTMTHLLENL (176 aa). Positions 591 to 622 form a coiled coil; the sequence is GRTLGALESLTLNLAQLTARLEDLENQLANQK.

As to quaternary structure, interacts with COMP. Embryonic kidney, lung and placenta.

The protein localises to the secreted. Its function is as follows. Major component of the extracellular matrix of cartilage. This Homo sapiens (Human) protein is Matrilin-4 (MATN4).